A 297-amino-acid chain; its full sequence is D-aminoacyl-tRNA deacylase (297 aa).

It belongs to the DtdA deacylase family. In terms of assembly, monomer. Requires Zn(2+) as cofactor.

It carries out the reaction a D-aminoacyl-tRNA + H2O = a tRNA + a D-alpha-amino acid + H(+). The catalysed reaction is glycyl-tRNA(Ala) + H2O = tRNA(Ala) + glycine + H(+). In terms of biological role, D-aminoacyl-tRNA deacylase with broad substrate specificity. By recycling D-aminoacyl-tRNA to D-amino acids and free tRNA molecules, this enzyme counteracts the toxicity associated with the formation of D-aminoacyl-tRNA entities in vivo. This Methanosarcina acetivorans (strain ATCC 35395 / DSM 2834 / JCM 12185 / C2A) protein is D-aminoacyl-tRNA deacylase.